The sequence spans 255 residues: Diphthine synthase (255 aa).

Residues L9, D85, V88, 113-114 (SI), L164, A207, and H232 contribute to the S-adenosyl-L-methionine site.

Belongs to the diphthine synthase family. Homodimer.

The catalysed reaction is 2-[(3S)-amino-3-carboxypropyl]-L-histidyl-[translation elongation factor 2] + 3 S-adenosyl-L-methionine = diphthine-[translation elongation factor 2] + 3 S-adenosyl-L-homocysteine + 3 H(+). Its pathway is protein modification; peptidyl-diphthamide biosynthesis. Functionally, S-adenosyl-L-methionine-dependent methyltransferase that catalyzes the trimethylation of the amino group of the modified target histidine residue in translation elongation factor 2 (EF-2), to form an intermediate called diphthine. The three successive methylation reactions represent the second step of diphthamide biosynthesis. This chain is Diphthine synthase, found in Methanococcus maripaludis (strain C6 / ATCC BAA-1332).